Reading from the N-terminus, the 435-residue chain is Probable xyloglucan galactosyltransferase GT19 (435 aa).

Residues 1–6 (MASKST) are Cytoplasmic-facing. The helical; Signal-anchor for type II membrane protein transmembrane segment at 7-23 (VTTLTIFFFFFFFFIEP) threads the bilayer. At 24-435 (KVQSQQISAV…GVLDRIISRV (412 aa)) the chain is on the lumenal side. N140, N203, and N277 each carry an N-linked (GlcNAc...) asparagine glycan.

It belongs to the glycosyltransferase 47 family. As to expression, expressed in roots, hypocotyls, cotyledons, leaves, stems, stamens and pollen grains.

It localises to the golgi apparatus membrane. Its function is as follows. Functions in xyloglucan synthesis by adding side chains to the xylosylated glucan backbone. Involved in the galactosylation of hemicellulose xyloglucan. The chain is Probable xyloglucan galactosyltransferase GT19 from Arabidopsis thaliana (Mouse-ear cress).